The sequence spans 486 residues: H2.0-like homeobox protein (486 aa).

Disordered stretches follow at residues 83-173 (ASFQ…SSKD) and 330-486 (KWRH…LGGL). Low complexity predominate over residues 125–135 (QQQQQQQQPQQ). The segment at residues 276–335 (RSWSRAVFSNLQRKGLEKRFEIQKYVTKPDRKQLAAMLGLTDAQVKVWFQNRRMKWRHSK) is a DNA-binding region (homeobox). Composition is skewed to basic and acidic residues over residues 334–349 (SKEA…EAGE) and 363–372 (EERSPSRSEG). Residues 373 to 383 (EAESESSDPES) show a composition bias toward acidic residues. Over residues 390-401 (DTERTEGTERSL) the composition is skewed to basic and acidic residues. The segment covering 409 to 420 (ASAAGALLAASS) has biased composition (low complexity). The segment covering 421-440 (GGSGGSGGGGGGGFNFGGLS) has biased composition (gly residues). Residues 441 to 474 (SGSTTSAGSSGSHSSGGASELLPAPQPSLSSAPK) are compositionally biased toward low complexity. Positions 475–486 (SPEPVPAPLGGL) are enriched in pro residues.

The protein belongs to the H2.0 homeobox family.

It localises to the nucleus. In terms of biological role, transcription factor required for TBX21/T-bet-dependent maturation of Th1 cells as well as maintenance of Th1-specific gene expression. Involved in embryogenesis and hematopoiesis. The protein is H2.0-like homeobox protein (HLX) of Bos taurus (Bovine).